A 394-amino-acid polypeptide reads, in one-letter code: Myb-related protein 2 (394 aa).

The region spanning 42-102 (TDAKPRLKWT…HLQKYRLSKN (61 aa)) is the HTH myb-type domain. Residues 73–98 (PKTIMKVMGIPGLTLYHLKSHLQKYR) constitute a DNA-binding region (H-T-H motif). Positions 148–168 (GEALQMQIEVQRRLHEQLEVQ) are coiled coil. The LHEQLE signature appears at 161-166 (LHEQLE). The interval 338-363 (LHGHKSQHQQGNNEDHKLETRNRKGM) is disordered. Positions 350-363 (NEDHKLETRNRKGM) are enriched in basic and acidic residues.

The protein belongs to the MYB-CC family. As to quaternary structure, isoform 1: Homodimer. Isoform 3: Does not form homodimer. As to expression, expressed in phloem and/or cambium.

The protein resides in the nucleus. Its function is as follows. Transcriptional activator that may activate the transcription of specific genes involved in nitrogen uptake or assimilation. Acts redundantly with MYR1 as a repressor of flowering and organ elongation under decreased light intensity. Represses gibberellic acid (GA)-dependent responses and affects levels of bioactive GA. In Arabidopsis thaliana (Mouse-ear cress), this protein is Myb-related protein 2.